We begin with the raw amino-acid sequence, 84 residues long: uncharacterized protein (84 aa).

One can recognise an LITAF domain in the interval 1–83; the sequence is MDDKFTTLPC…CKQAVFVYKI (83 aa). Zn(2+)-binding residues include Cys21 and Cys24. The tract at residues 39-61 is membrane-binding amphipathic helix; that stretch reads MSWVVCTAITLACLPCCCIPFLC. 2 residues coordinate Zn(2+): Cys71 and Cys74.

Its subcellular location is the host membrane. This is an uncharacterized protein from Dryophytes versicolor (chameleon treefrog).